A 408-amino-acid polypeptide reads, in one-letter code: AA9 family lytic polysaccharide monooxygenase A (408 aa).

The signal sequence occupies residues 1–20 (MKTTTYSLLALAAASKLASA). Positions 21 and 103 each coordinate Cu(2+). Cys-63 and Cys-186 form a disulfide bridge. Asn-151 carries N-linked (GlcNAc...) asparagine glycosylation. Residue His-172 coordinates O2. Cu(2+) is bound at residue Tyr-183. N-linked (GlcNAc...) asparagine glycans are attached at residues Asn-331 and Asn-381. Residues 369-405 (GVAKQYERCGGINHTGPTTCESGSVCKKWNPYYYQCV) form the CBM1 domain.

This sequence belongs to the polysaccharide monooxygenase AA9 family. Requires Cu(2+) as cofactor.

It is found in the secreted. It catalyses the reaction [(1-&gt;4)-beta-D-glucosyl]n+m + reduced acceptor + O2 = 4-dehydro-beta-D-glucosyl-[(1-&gt;4)-beta-D-glucosyl]n-1 + [(1-&gt;4)-beta-D-glucosyl]m + acceptor + H2O.. In terms of biological role, lytic polysaccharide monooxygenase (LPMO) that depolymerizes crystalline and amorphous polysaccharides via the oxidation of scissile alpha- or beta-(1-4)-glycosidic bonds, yielding C4 oxidation products. Catalysis by LPMOs requires the reduction of the active-site copper from Cu(II) to Cu(I) by a reducing agent and H(2)O(2) or O(2) as a cosubstrate. This chain is AA9 family lytic polysaccharide monooxygenase A (eglD), found in Aspergillus kawachii (strain NBRC 4308) (White koji mold).